We begin with the raw amino-acid sequence, 697 residues long: Elongation factor G (697 aa).

The tr-type G domain maps to 10-285 (AKTRNIGIMA…GVIDYLPSPL (276 aa)). Residues 19–26 (AHIDAGKT), 83–87 (DTPGH), and 137–140 (NKMD) each bind GTP.

The protein belongs to the TRAFAC class translation factor GTPase superfamily. Classic translation factor GTPase family. EF-G/EF-2 subfamily.

It is found in the cytoplasm. Catalyzes the GTP-dependent ribosomal translocation step during translation elongation. During this step, the ribosome changes from the pre-translocational (PRE) to the post-translocational (POST) state as the newly formed A-site-bound peptidyl-tRNA and P-site-bound deacylated tRNA move to the P and E sites, respectively. Catalyzes the coordinated movement of the two tRNA molecules, the mRNA and conformational changes in the ribosome. This chain is Elongation factor G, found in Lactobacillus helveticus (strain DPC 4571).